An 878-amino-acid chain; its full sequence is DNA mismatch repair protein MutS (878 aa).

Residue 626–633 (GPNMAGKS) coordinates ATP.

The protein belongs to the DNA mismatch repair MutS family.

In terms of biological role, this protein is involved in the repair of mismatches in DNA. It is possible that it carries out the mismatch recognition step. This protein has a weak ATPase activity. This is DNA mismatch repair protein MutS from Paracoccus denitrificans (strain Pd 1222).